A 130-amino-acid chain; its full sequence is Neelaredoxin (130 aa).

Fe cation-binding residues include Glu-15, His-17, His-45, His-51, Cys-115, and His-118.

It belongs to the desulfoferrodoxin family. As to quaternary structure, monomer. It depends on Fe cation as a cofactor.

It catalyses the reaction 2 superoxide + 2 H(+) = H2O2 + O2. Functionally, non-heme iron protein. The chain is Neelaredoxin (nlr) from Megalodesulfovibrio gigas (Desulfovibrio gigas).